A 308-amino-acid polypeptide reads, in one-letter code: Probable peptidyl-prolyl cis-trans isomerase B (308 aa).

The tract at residues 74–123 is disordered; that stretch reads DHQSTTSATPTDSASTSPPQAATAPPLPPFKPSANLGANCQYPPSPDKAV. Low complexity predominate over residues 77 to 97; the sequence is STTSATPTDSASTSPPQAATA. Residues 139 to 307 enclose the PPIase cyclophilin-type domain; it reads AQVSVSMVTN…TEVTITSVLL (169 aa).

The protein belongs to the cyclophilin-type PPIase family.

It carries out the reaction [protein]-peptidylproline (omega=180) = [protein]-peptidylproline (omega=0). Its function is as follows. PPIases accelerate the folding of proteins. It catalyzes the cis-trans isomerization of proline imidic peptide bonds in oligopeptides. This chain is Probable peptidyl-prolyl cis-trans isomerase B (ppiB), found in Mycobacterium tuberculosis (strain CDC 1551 / Oshkosh).